Here is a 436-residue protein sequence, read N- to C-terminus: Gamma-glutamyl phosphate reductase (436 aa).

Belongs to the gamma-glutamyl phosphate reductase family.

It is found in the cytoplasm. It catalyses the reaction L-glutamate 5-semialdehyde + phosphate + NADP(+) = L-glutamyl 5-phosphate + NADPH + H(+). It functions in the pathway amino-acid biosynthesis; L-proline biosynthesis; L-glutamate 5-semialdehyde from L-glutamate: step 2/2. Its function is as follows. Catalyzes the NADPH-dependent reduction of L-glutamate 5-phosphate into L-glutamate 5-semialdehyde and phosphate. The product spontaneously undergoes cyclization to form 1-pyrroline-5-carboxylate. The polypeptide is Gamma-glutamyl phosphate reductase (Prochlorococcus marinus (strain MIT 9301)).